Here is a 541-residue protein sequence, read N- to C-terminus: Ankyrin repeat domain-containing protein 13C (541 aa).

The span at 1–20 (MTGEKIRSLRRDHKPSKEEG) shows a compositional bias: basic and acidic residues. The interval 1-27 (MTGEKIRSLRRDHKPSKEEGDLLEPGD) is disordered. ANK repeat units lie at residues 111–142 (PAHYPVHECVFKGDVRRLSSLIRTHNIGQKDN), 143–172 (HGNTPLHLAVMLGNKECAHLLLAHNAPVKV), and 176–205 (QGWSPLAEAISYGDRQMITALLRKLKQQSR). S411 bears the Phosphoserine mark.

Its subcellular location is the endoplasmic reticulum membrane. In terms of biological role, acts as a molecular chaperone for G protein-coupled receptors, regulating their biogenesis and exit from the ER. This Homo sapiens (Human) protein is Ankyrin repeat domain-containing protein 13C (ANKRD13C).